A 327-amino-acid polypeptide reads, in one-letter code: GMP reductase (327 aa).

C176 serves as the catalytic Thioimidate intermediate. 205–228 lines the NADP(+) pocket; sequence IIADGGIRTHGDIAKSIRFGASMV.

It belongs to the IMPDH/GMPR family. GuaC type 2 subfamily.

It catalyses the reaction IMP + NH4(+) + NADP(+) = GMP + NADPH + 2 H(+). Its function is as follows. Catalyzes the irreversible NADPH-dependent deamination of GMP to IMP. It functions in the conversion of nucleobase, nucleoside and nucleotide derivatives of G to A nucleotides, and in maintaining the intracellular balance of A and G nucleotides. This chain is GMP reductase, found in Streptococcus suis (strain 05ZYH33).